A 423-amino-acid polypeptide reads, in one-letter code: Glucose-1-phosphate adenylyltransferase (423 aa).

Residues Tyr108, Gly173, 188-189 (EK), and Ser207 contribute to the alpha-D-glucose 1-phosphate site.

The protein belongs to the bacterial/plant glucose-1-phosphate adenylyltransferase family. Homotetramer.

The catalysed reaction is alpha-D-glucose 1-phosphate + ATP + H(+) = ADP-alpha-D-glucose + diphosphate. It functions in the pathway glycan biosynthesis; glycogen biosynthesis. Involved in the biosynthesis of ADP-glucose, a building block required for the elongation reactions to produce glycogen. Catalyzes the reaction between ATP and alpha-D-glucose 1-phosphate (G1P) to produce pyrophosphate and ADP-Glc. The chain is Glucose-1-phosphate adenylyltransferase from Francisella tularensis subsp. holarctica (strain FTNF002-00 / FTA).